The primary structure comprises 192 residues: Xanthine phosphoribosyltransferase (192 aa).

L20 and T26 together coordinate xanthine. 127 to 131 (ANGQA) contacts 5-phospho-alpha-D-ribose 1-diphosphate. K155 serves as a coordination point for xanthine.

This sequence belongs to the purine/pyrimidine phosphoribosyltransferase family. Xpt subfamily. Homodimer.

It is found in the cytoplasm. The catalysed reaction is XMP + diphosphate = xanthine + 5-phospho-alpha-D-ribose 1-diphosphate. It participates in purine metabolism; XMP biosynthesis via salvage pathway; XMP from xanthine: step 1/1. Converts the preformed base xanthine, a product of nucleic acid breakdown, to xanthosine 5'-monophosphate (XMP), so it can be reused for RNA or DNA synthesis. This chain is Xanthine phosphoribosyltransferase, found in Streptococcus thermophilus.